A 422-amino-acid chain; its full sequence is Serine--tRNA ligase (422 aa).

Residue T229 to E231 coordinates L-serine. R260–E262 is an ATP binding site. E283 contacts L-serine. Residue E347–S350 participates in ATP binding. S383 lines the L-serine pocket.

The protein belongs to the class-II aminoacyl-tRNA synthetase family. Type-1 seryl-tRNA synthetase subfamily. In terms of assembly, homodimer. The tRNA molecule binds across the dimer.

The protein localises to the cytoplasm. It carries out the reaction tRNA(Ser) + L-serine + ATP = L-seryl-tRNA(Ser) + AMP + diphosphate + H(+). It catalyses the reaction tRNA(Sec) + L-serine + ATP = L-seryl-tRNA(Sec) + AMP + diphosphate + H(+). The protein operates within aminoacyl-tRNA biosynthesis; selenocysteinyl-tRNA(Sec) biosynthesis; L-seryl-tRNA(Sec) from L-serine and tRNA(Sec): step 1/1. Functionally, catalyzes the attachment of serine to tRNA(Ser). Is also able to aminoacylate tRNA(Sec) with serine, to form the misacylated tRNA L-seryl-tRNA(Sec), which will be further converted into selenocysteinyl-tRNA(Sec). The polypeptide is Serine--tRNA ligase (Pelobacter propionicus (strain DSM 2379 / NBRC 103807 / OttBd1)).